Here is a 325-residue protein sequence, read N- to C-terminus: Cytochrome f (325 aa).

The N-terminal stretch at 1–40 is a signal peptide; sequence MKTPELMAIWQRLKTACLVAIATFGLFFASDVLFPQAAAA. Tyr-41, Cys-62, Cys-65, and His-66 together coordinate heme. A helical transmembrane segment spans residues 290–309; the sequence is IYGYMAFVAGIMLTQIFLVL.

It belongs to the cytochrome f family. In terms of assembly, the 4 large subunits of the cytochrome b6-f complex are cytochrome b6, subunit IV (17 kDa polypeptide, PetD), cytochrome f and the Rieske protein, while the 4 small subunits are PetG, PetL, PetM and PetN. The complex functions as a dimer. Requires heme as cofactor.

The protein resides in the cellular thylakoid membrane. Component of the cytochrome b6-f complex, which mediates electron transfer between photosystem II (PSII) and photosystem I (PSI), cyclic electron flow around PSI, and state transitions. In Picosynechococcus sp. (strain ATCC 27264 / PCC 7002 / PR-6) (Agmenellum quadruplicatum), this protein is Cytochrome f (petA).